A 314-amino-acid chain; its full sequence is Homoserine kinase (314 aa).

95–105 (PHSRGLGSSAS) is a binding site for ATP.

This sequence belongs to the GHMP kinase family. Homoserine kinase subfamily.

It is found in the cytoplasm. The enzyme catalyses L-homoserine + ATP = O-phospho-L-homoserine + ADP + H(+). It functions in the pathway amino-acid biosynthesis; L-threonine biosynthesis; L-threonine from L-aspartate: step 4/5. Catalyzes the ATP-dependent phosphorylation of L-homoserine to L-homoserine phosphate. The sequence is that of Homoserine kinase from Rhodococcus opacus (strain B4).